The sequence spans 468 residues: Zinc finger protein 672 (468 aa).

4 consecutive C2H2-type zinc fingers follow at residues 15 to 37 (YSCS…ERAH), 43 to 65 (FCCL…RWTH), 71 to 93 (YICS…LGTH), and 100 to 123 (RPCR…ARQH). The C2H2-type 5; degenerate zinc-finger motif lies at 129–151 (HRCPLCARSFRQSALPFHLARAH). C2H2-type zinc fingers lie at residues 167 to 189 (YHCT…SRIH), 202 to 224 (HLCG…LQRH), 230 to 252 (FKCP…QRTH), 258 to 280 (YACS…QRSH), 286 to 308 (HVCA…QRSH), 314 to 336 (FPCP…LRTH), 342 to 364 (YHCE…LRNH), 370 to 392 (HKCP…RKTH), and 398 to 420 (AECT…QRSH).

It belongs to the krueppel C2H2-type zinc-finger protein family.

It localises to the nucleus. Its function is as follows. May be involved in transcriptional regulation. This chain is Zinc finger protein 672 (Znf672), found in Mus musculus (Mouse).